Here is a 784-residue protein sequence, read N- to C-terminus: PWWP domain-containing protein 2A (784 aa).

4 disordered regions span residues 1–32 (MAAVAGAPGPGEGGESEQDSETIPGERRLGRL), 244–272 (KPVESIQEESKSFHEEPLVKSEENSPEDV), 463–567 (AKEK…EMQD), and 605–654 (SSSA…SSKE). A compositionally biased stretch (basic and acidic residues) spans 244–266 (KPVESIQEESKSFHEEPLVKSEE). Positions 536–556 (TRYSATRSAGETPSEIQSPSN) are enriched in polar residues. Over residues 605–614 (SSSASVCSSD) the composition is skewed to low complexity. Residues 684–744 (VGDIVWAKIY…LSQLTPFLEN (61 aa)) form the PWWP domain.

It localises to the nucleus. Functionally, H2A.Z-specific chromatin binding protein which plays an important role in the neural crest cell differentiation and/or migration during early development and is essential for the development of the head and eye. Acts as an adapter between distinct nucleosome components (H3K36me3 or H2A.Z) and chromatin-modifying complexes, contributing to the regulation of the levels of histone acetylation at actively transcribed genes. This chain is PWWP domain-containing protein 2A (pwwp2a), found in Xenopus tropicalis (Western clawed frog).